Consider the following 269-residue polypeptide: Hydroxyethylthiazole kinase (269 aa).

Substrate is bound at residue Met45. Arg121 and Thr167 together coordinate ATP. Gly194 is a binding site for substrate.

It belongs to the Thz kinase family. It depends on Mg(2+) as a cofactor.

The enzyme catalyses 5-(2-hydroxyethyl)-4-methylthiazole + ATP = 4-methyl-5-(2-phosphooxyethyl)-thiazole + ADP + H(+). It participates in cofactor biosynthesis; thiamine diphosphate biosynthesis; 4-methyl-5-(2-phosphoethyl)-thiazole from 5-(2-hydroxyethyl)-4-methylthiazole: step 1/1. Catalyzes the phosphorylation of the hydroxyl group of 4-methyl-5-beta-hydroxyethylthiazole (THZ). This Bacillus cytotoxicus (strain DSM 22905 / CIP 110041 / 391-98 / NVH 391-98) protein is Hydroxyethylthiazole kinase.